The sequence spans 334 residues: MYKIAFDVMGSDLGSLTAIKAASEFIKEHNDLYLILVGDETEIKTALEQNPIDKNKYEILPTTQVIDMNGSILDIRRKKDASIIRTLELVRDQKVDGMLTAGNSAAFIGAAHFILGELNNIVRAGFMPTMPNAKNKLTLLLDVGANSENTPEDLINYAKMANIYYTEVLKNPNATVGLLNIGTEKSKGLELQKQTFKQLEKLKNINFVGNVESRDVLTGNVDIIVTDGYSGNICLKACEGAAKVLLTEIKKEITSSFIRKLAALVLKKSFKNVAAKFDYKNHAGAILLGVKGICFKSHGSSDVRSFKATLRMTLDAIKNNIVEKIEKGLIKNEY.

The protein belongs to the PlsX family. Homodimer. Probably interacts with PlsY.

It is found in the cytoplasm. The enzyme catalyses a fatty acyl-[ACP] + phosphate = an acyl phosphate + holo-[ACP]. The protein operates within lipid metabolism; phospholipid metabolism. Its function is as follows. Catalyzes the reversible formation of acyl-phosphate (acyl-PO(4)) from acyl-[acyl-carrier-protein] (acyl-ACP). This enzyme utilizes acyl-ACP as fatty acyl donor, but not acyl-CoA. This chain is Phosphate acyltransferase, found in Mycoplasma capricolum subsp. capricolum (strain California kid / ATCC 27343 / NCTC 10154).